The sequence spans 404 residues: Lysophospholipid transporter LplT (404 aa).

A run of 12 helical transmembrane segments spans residues 16–36 (MIAV…LLFA), 53–73 (ILQM…GQFA), 91–111 (AGAL…LVGV), 139–159 (MMEA…GVLA), 164–184 (GVAL…NMFI), 195–213 (SWRP…LVLW), 227–247 (LFWG…PIAL), 253–273 (ATPT…AGAA), 285–305 (CLPA…QHSM), 310–330 (LLLI…NALL), 350–370 (GENT…KLGV), and 372–392 (VIAV…LLWG).

This sequence belongs to the major facilitator superfamily. LplT (TC 2.A.1.42) family.

It localises to the cell inner membrane. Catalyzes the facilitated diffusion of 2-acyl-glycero-3-phosphoethanolamine (2-acyl-GPE) into the cell. The sequence is that of Lysophospholipid transporter LplT from Yersinia enterocolitica serotype O:8 / biotype 1B (strain NCTC 13174 / 8081).